The following is a 366-amino-acid chain: Carbamoyl phosphate synthase small chain (366 aa).

The interval 1–171 (MLERRYLVLE…KTPYVSTGSD (171 aa)) is CPSase. 3 residues coordinate L-glutamine: serine 47, glycine 221, and glycine 223. In terms of domain architecture, Glutamine amidotransferase type-1 spans 173-360 (SVVLLDFGKK…MTMMKEFKEK (188 aa)). The active-site Nucleophile is the cysteine 248. L-glutamine contacts are provided by leucine 249, glutamine 252, asparagine 290, glycine 292, and tyrosine 293. Residues histidine 333 and glutamate 335 contribute to the active site.

Belongs to the CarA family. As to quaternary structure, composed of two chains; the small (or glutamine) chain promotes the hydrolysis of glutamine to ammonia, which is used by the large (or ammonia) chain to synthesize carbamoyl phosphate. Tetramer of heterodimers (alpha,beta)4.

It catalyses the reaction hydrogencarbonate + L-glutamine + 2 ATP + H2O = carbamoyl phosphate + L-glutamate + 2 ADP + phosphate + 2 H(+). It carries out the reaction L-glutamine + H2O = L-glutamate + NH4(+). The protein operates within amino-acid biosynthesis; L-arginine biosynthesis; carbamoyl phosphate from bicarbonate: step 1/1. It functions in the pathway pyrimidine metabolism; UMP biosynthesis via de novo pathway; (S)-dihydroorotate from bicarbonate: step 1/3. Its function is as follows. Small subunit of the glutamine-dependent carbamoyl phosphate synthetase (CPSase). CPSase catalyzes the formation of carbamoyl phosphate from the ammonia moiety of glutamine, carbonate, and phosphate donated by ATP, constituting the first step of 2 biosynthetic pathways, one leading to arginine and/or urea and the other to pyrimidine nucleotides. The small subunit (glutamine amidotransferase) binds and cleaves glutamine to supply the large subunit with the substrate ammonia. The protein is Carbamoyl phosphate synthase small chain of Staphylococcus haemolyticus (strain JCSC1435).